Reading from the N-terminus, the 48-residue chain is Fimbrial assembly protein, serogroup A1 (48 aa).

This is Fimbrial assembly protein, serogroup A1 (fimB) from Dichelobacter nodosus (Bacteroides nodosus).